The primary structure comprises 337 residues: Calcium-binding protein 39-like (337 aa).

This sequence belongs to the Mo25 family. Component of a trimeric complex composed of STK11/LKB1, STRAD (STRADA or STRADB) and CAB39/MO25 (CAB39/MO25alpha or CAB39L/MO25beta): the complex tethers STK11/LKB1 in the cytoplasm and stimulates its catalytic activity.

In terms of biological role, component of a complex that binds and activates STK11/LKB1. In the complex, required to stabilize the interaction between CAB39/MO25 (CAB39/MO25alpha or CAB39L/MO25beta) and STK11/LKB1. This is Calcium-binding protein 39-like (CAB39L) from Homo sapiens (Human).